A 328-amino-acid chain; its full sequence is AA9 family lytic polysaccharide monooxygenase A (328 aa).

Positions 1-21 are cleaved as a signal peptide; sequence MPSTKVAALSAVLALASTVAG. His22 lines the Cu(2+) pocket. Methylhistidine is present on His22. 2 cysteine pairs are disulfide-bonded: Cys77/Cys199 and Cys118/Cys122. A glycan (N-linked (GlcNAc...) asparagine) is linked at Asn80. Cu(2+) is bound at residue His107. Residues Asn121 and Asn159 are each glycosylated (N-linked (GlcNAc...) asparagine). His185 and Gln194 together coordinate O2. Tyr196 is a Cu(2+) binding site. Ser235 and Ser237 each carry an O-linked (Man...) serine glycan. Residues Thr238 and Thr245 are each glycosylated (O-linked (Man...) threonine).

Belongs to the polysaccharide monooxygenase AA9 family. Cu(2+) serves as cofactor. Post-translationally, the catalytically essential N-terminal histidine His-22 is post-translationally modified by methylation to prevent protonation of the histidine side chain, and protect the critical active site of the enzyme from oxidative damage.

The protein localises to the secreted. It carries out the reaction [(1-&gt;4)-beta-D-glucosyl]n+m + reduced acceptor + O2 = 4-dehydro-beta-D-glucosyl-[(1-&gt;4)-beta-D-glucosyl]n-1 + [(1-&gt;4)-beta-D-glucosyl]m + acceptor + H2O.. In terms of biological role, lytic polysaccharide monooxygenase (LPMO) that depolymerizes crystalline and amorphous polysaccharides via the oxidation of scissile alpha- or beta-(1-4)-glycosidic bonds, yielding C1 and C4 oxidation products. Catalysis by LPMOs requires the reduction of the active-site copper from Cu(II) to Cu(I) by a reducing agent and H(2)O(2) or O(2) as a cosubstrate. Shows activity on cellulosic substrates (Avicel, carboxymethylcellulose) and xylan. In Talaromyces verruculosus (Penicillium verruculosum), this protein is AA9 family lytic polysaccharide monooxygenase A.